A 1201-amino-acid chain; its full sequence is DNA-directed RNA polymerase subunit beta' (1201 aa).

Residues Cys-60, Cys-62, Cys-75, and Cys-78 each contribute to the Zn(2+) site. Residues Asp-449, Asp-451, and Asp-453 each contribute to the Mg(2+) site. 4 residues coordinate Zn(2+): Cys-818, Cys-892, Cys-899, and Cys-902.

The protein belongs to the RNA polymerase beta' chain family. The RNAP catalytic core consists of 2 alpha, 1 beta, 1 beta' and 1 omega subunit. When a sigma factor is associated with the core the holoenzyme is formed, which can initiate transcription. It depends on Mg(2+) as a cofactor. Requires Zn(2+) as cofactor.

It catalyses the reaction RNA(n) + a ribonucleoside 5'-triphosphate = RNA(n+1) + diphosphate. In terms of biological role, DNA-dependent RNA polymerase catalyzes the transcription of DNA into RNA using the four ribonucleoside triphosphates as substrates. The chain is DNA-directed RNA polymerase subunit beta' from Listeria monocytogenes serovar 1/2a (strain ATCC BAA-679 / EGD-e).